The following is a 3390-amino-acid chain: Genome polyprotein (3390 aa).

Residues Met-1–Met-15 form an interaction with host EXOC1 region. Residues Met-1–Lys-100 are Cytoplasmic-facing. Positions Leu-37 to Phe-72 are hydrophobic; homodimerization of capsid protein C. A propeptide spans Thr-101 to Ala-114 (ER anchor for the capsid protein C, removed in mature form by serine protease NS3). A helical membrane pass occupies residues Thr-101–Arg-120. Topologically, residues Asp-121–Arg-243 are extracellular. An N-linked (GlcNAc...) asparagine; by host glycan is attached at Asn-183. A helical membrane pass occupies residues His-244–Gln-264. Position 265 (Lys-265) is a topological domain, cytoplasmic. A helical transmembrane segment spans residues Val-266 to Thr-280. Topologically, residues Met-281 to Thr-723 are extracellular. 4 disulfides stabilise this stretch: Cys-283/Cys-310, Cys-340/Cys-401, Cys-354/Cys-385, and Cys-372/Cys-396. A glycan (N-linked (GlcNAc...) asparagine; by host) is linked at Asn-347. The tract at residues Asp-378–Gly-391 is fusion peptide. N-linked (GlcNAc...) asparagine; by host glycosylation is present at Asn-433. 2 disulfides stabilise this stretch: Cys-463-Cys-563 and Cys-580-Cys-611. The chain crosses the membrane as a helical span at residues Ala-724–Ile-744. The Cytoplasmic portion of the chain corresponds to Gly-745 to Asn-750. The helical transmembrane segment at Thr-751–Val-771 threads the bilayer. Over Gln-772–Met-1193 the chain is Extracellular. 6 disulfide bridges follow: Cys-777–Cys-788, Cys-828–Cys-916, Cys-952–Cys-996, Cys-1053–Cys-1102, Cys-1064–Cys-1086, and Cys-1085–Cys-1089. 2 N-linked (GlcNAc...) asparagine; by host glycosylation sites follow: Asn-903 and Asn-980. 2 N-linked (GlcNAc...) asparagine; by host glycosylation sites follow: Asn-1132 and Asn-1188. Residues Gly-1194 to Leu-1218 form a helical membrane-spanning segment. Residues Arg-1219 to Arg-1224 lie on the Cytoplasmic side of the membrane. The chain crosses the membrane as a helical span at residues Glu-1225 to Glu-1243. The Lumenal segment spans residues Asp-1244 to Thr-1267. The helical transmembrane segment at Tyr-1268–Val-1288 threads the bilayer. Position 1289 (Ala-1289) is a topological domain, cytoplasmic. The helical transmembrane segment at Trp-1290 to Ser-1308 threads the bilayer. Over Ser-1309–Asp-1315 the chain is Lumenal. The helical transmembrane segment at Trp-1316 to Leu-1336 threads the bilayer. Over Lys-1337 to Ser-1344 the chain is Cytoplasmic. A helical membrane pass occupies residues Trp-1345–Leu-1365. The Lumenal portion of the chain corresponds to Arg-1366 to Asp-1368. Residues Val-1369–Gly-1389 traverse the membrane as a helical segment. At Thr-1390–Lys-1443 the chain is on the cytoplasmic side. The tract at residues Val-1396 to Glu-1435 is interacts with and activates NS3 protease. Positions Thr-1444–Trp-1464 form an intramembrane region, helical. At His-1465–Thr-2146 the chain is on the cytoplasmic side. The region spanning Ser-1474–Glu-1651 is the Peptidase S7 domain. Active-site charge relay system; for serine protease NS3 activity residues include His-1524, Asp-1548, and Ser-1608. Residues Glu-1654 to Glu-1810 enclose the Helicase ATP-binding domain. The segment at Lys-1658–Asn-1661 is important for RNA-binding. An ATP-binding site is contributed by Leu-1667–Thr-1674. A DEAH box motif is present at residues Asp-1758 to His-1761. Residues Ser-1820–Glu-1986 form the Helicase C-terminal domain. The residue at position 1862 (Lys-1862) is an N6-acetyllysine; by host. The chain crosses the membrane as a helical span at residues Leu-2147–Gly-2167. Residues Lys-2168–Gly-2169 lie on the Lumenal side of the membrane. The helical intramembrane region spans Ile-2170–Ala-2190. Residue Glu-2191 is a topological domain, lumenal. Residues Val-2192 to Ile-2212 traverse the membrane as a helical segment. The Cytoplasmic portion of the chain corresponds to Pro-2213–Ala-2227. The chain crosses the membrane as a helical span at residues Tyr-2228–Leu-2248. Residues Glu-2249–Asp-2273 are Lumenal-facing. An intramembrane region (helical) is located at residues Leu-2274–Leu-2294. Residues Arg-2295–Val-2305 lie on the Lumenal side of the membrane. Asn-2300 and Asn-2304 each carry an N-linked (GlcNAc...) asparagine; by host glycan. Residues Ser-2306–Ile-2326 constitute an intramembrane region (helical). Residues Ser-2327–Pro-2346 lie on the Lumenal side of the membrane. The helical transmembrane segment at Leu-2347–Leu-2367 threads the bilayer. Over Gln-2368–Gln-2412 the chain is Cytoplasmic. The chain crosses the membrane as a helical span at residues Val-2413 to Cys-2433. The Lumenal portion of the chain corresponds to Glu-2434–Thr-2458. N-linked (GlcNAc...) asparagine; by host glycosylation occurs at Asn-2456. A helical transmembrane segment spans residues Ile-2459–Phe-2479. At Ser-2480–Trp-3390 the chain is on the cytoplasmic side. The mRNA cap 0-1 NS5-type MT domain maps to Thr-2492 to His-2753. Position 2546 (Ser-2546) interacts with S-adenosyl-L-methionine. Residue Ser-2546 is modified to Phosphoserine. The active-site For 2'-O-MTase activity is Lys-2551. Positions Val-2567 to Leu-2570 match the SUMO-interacting motif motif. S-adenosyl-L-methionine contacts are provided by Gly-2576, Trp-2577, Thr-2594, Lys-2595, Asp-2621, and Val-2622. Asp-2636 (for 2'-O-MTase activity) is an active-site residue. Position 2637 (Ile-2637) interacts with S-adenosyl-L-methionine. Active-site for 2'-O-MTase activity residues include Lys-2670 and Glu-2706. S-adenosyl-L-methionine is bound at residue Tyr-2708. The Zn(2+) site is built by Glu-2927, His-2931, Cys-2936, and Cys-2939. The RdRp catalytic domain occupies Ala-3018 to Leu-3168. 3 residues coordinate Zn(2+): His-3202, Cys-3218, and Cys-3337.

The protein in the N-terminal section; belongs to the class I-like SAM-binding methyltransferase superfamily. mRNA cap 0-1 NS5-type methyltransferase family. Homodimer. Interacts (via N-terminus) with host EXOC1 (via C-terminus); this interaction results in EXOC1 degradation through the proteasome degradation pathway. As to quaternary structure, forms heterodimers with envelope protein E in the endoplasmic reticulum and Golgi. In terms of assembly, homodimer; in the endoplasmic reticulum and Golgi. Interacts with protein prM. Interacts with non-structural protein 1. Homodimer; Homohexamer when secreted. Interacts with envelope protein E. As to quaternary structure, interacts (via N-terminus) with serine protease NS3. In terms of assembly, forms a heterodimer with serine protease NS3. May form homooligomers. Forms a heterodimer with NS2B. Interacts with NS4B. Interacts with unphosphorylated RNA-directed RNA polymerase NS5; this interaction stimulates RNA-directed RNA polymerase NS5 guanylyltransferase activity. Interacts with host SHFL. As to quaternary structure, interacts with host MAVS; this interaction inhibits the synthesis of IFN-beta. Interacts with host SHFL. Interacts with host AUP1; the interaction occurs in the presence of Dengue virus NS4B and induces lipophagy which facilitates production of virus progeny particles. In terms of assembly, interacts with serine protease NS3. Homodimer. Interacts with host STAT2; this interaction inhibits the phosphorylation of the latter, and, when all viral proteins are present (polyprotein), targets STAT2 for degradation. Interacts with serine protease NS3. Post-translationally, specific enzymatic cleavages in vivo yield mature proteins. Cleavages in the lumen of endoplasmic reticulum are performed by host signal peptidase, whereas cleavages in the cytoplasmic side are performed by serine protease NS3. Signal cleavage at the 2K-4B site requires a prior NS3 protease-mediated cleavage at the 4A-2K site. Cleaved in post-Golgi vesicles by a host furin, releasing the mature small envelope protein M, and peptide pr. This cleavage is incomplete as up to 30% of viral particles still carry uncleaved prM. In terms of processing, N-glycosylated. Post-translationally, N-glycosylated. The excreted form is glycosylated and this is required for efficient secretion of the protein from infected cells. Acetylated by host KAT5. Acetylation modulates NS3 RNA-binding and unwinding activities and plays an important positive role for viral replication. In terms of processing, sumoylation of RNA-directed RNA polymerase NS5 increases NS5 protein stability allowing proper viral RNA replication. Post-translationally, phosphorylated on serines residues. This phosphorylation may trigger NS5 nuclear localization.

The protein localises to the virion. The protein resides in the host nucleus. It localises to the host cytoplasm. Its subcellular location is the host perinuclear region. It is found in the secreted. The protein localises to the virion membrane. The protein resides in the host endoplasmic reticulum membrane. It localises to the host mitochondrion. The catalysed reaction is Selective hydrolysis of -Xaa-Xaa-|-Yaa- bonds in which each of the Xaa can be either Arg or Lys and Yaa can be either Ser or Ala.. The enzyme catalyses RNA(n) + a ribonucleoside 5'-triphosphate = RNA(n+1) + diphosphate. It carries out the reaction a ribonucleoside 5'-triphosphate + H2O = a ribonucleoside 5'-diphosphate + phosphate + H(+). It catalyses the reaction ATP + H2O = ADP + phosphate + H(+). The catalysed reaction is a 5'-end (5'-triphosphoguanosine)-ribonucleoside in mRNA + S-adenosyl-L-methionine = a 5'-end (N(7)-methyl 5'-triphosphoguanosine)-ribonucleoside in mRNA + S-adenosyl-L-homocysteine. The enzyme catalyses a 5'-end (N(7)-methyl 5'-triphosphoguanosine)-ribonucleoside in mRNA + S-adenosyl-L-methionine = a 5'-end (N(7)-methyl 5'-triphosphoguanosine)-(2'-O-methyl-ribonucleoside) in mRNA + S-adenosyl-L-homocysteine + H(+). In terms of biological role, plays a role in virus budding by binding to the cell membrane and gathering the viral RNA into a nucleocapsid that forms the core of a mature virus particle. During virus entry, may induce genome penetration into the host cytoplasm after hemifusion induced by the surface proteins. Can migrate to the cell nucleus where it modulates host functions. Overcomes the anti-viral effects of host EXOC1 by sequestering and degrading the latter through the proteasome degradation pathway. Functionally, inhibits RNA silencing by interfering with host Dicer. Its function is as follows. Prevents premature fusion activity of envelope proteins in trans-Golgi by binding to envelope protein E at pH6.0. After virion release in extracellular space, gets dissociated from E dimers. Acts as a chaperone for envelope protein E during intracellular virion assembly by masking and inactivating envelope protein E fusion peptide. prM is the only viral peptide matured by host furin in the trans-Golgi network probably to avoid catastrophic activation of the viral fusion activity in acidic Golgi compartment prior to virion release. prM-E cleavage is inefficient, and many virions are only partially matured. These uncleaved prM would play a role in immune evasion. In terms of biological role, may play a role in virus budding. Exerts cytotoxic effects by activating a mitochondrial apoptotic pathway through M ectodomain. May display a viroporin activity. Functionally, binds to host cell surface receptor and mediates fusion between viral and cellular membranes. Envelope protein is synthesized in the endoplasmic reticulum in the form of heterodimer with protein prM. They play a role in virion budding in the ER, and the newly formed immature particle is covered with 60 spikes composed of heterodimer between precursor prM and envelope protein E. The virion is transported to the Golgi apparatus where the low pH causes dissociation of PrM-E heterodimers and formation of E homodimers. prM-E cleavage is inefficient, and many virions are only partially matured. These uncleaved prM would play a role in immune evasion. Its function is as follows. Involved in immune evasion, pathogenesis and viral replication. Once cleaved off the polyprotein, is targeted to three destinations: the viral replication cycle, the plasma membrane and the extracellular compartment. Essential for viral replication. Required for formation of the replication complex and recruitment of other non-structural proteins to the ER-derived membrane structures. Excreted as a hexameric lipoparticle that plays a role against host immune response. Antagonizing the complement function. Binds to the host macrophages and dendritic cells. Inhibits signal transduction originating from Toll-like receptor 3 (TLR3). Disrupts the host endothelial glycocalyx layer of host pulmonary microvascular endothelial cells, inducing degradation of sialic acid and shedding of heparan sulfate proteoglycans. NS1 induces expression of sialidases, heparanase, and activates cathepsin L, which activates heparanase via enzymatic cleavage. These effects are probably linked to the endothelial hyperpermeability observed in severe dengue disease. In terms of biological role, component of the viral RNA replication complex that functions in virion assembly and antagonizes the host immune response. Functionally, required cofactor for the serine protease function of NS3. May have membrane-destabilizing activity and form viroporins. Its function is as follows. Displays three enzymatic activities: serine protease, NTPase and RNA helicase. NS3 serine protease, in association with NS2B, performs its autocleavage and cleaves the polyprotein at dibasic sites in the cytoplasm: C-prM, NS2A-NS2B, NS2B-NS3, NS3-NS4A, NS4A-2K and NS4B-NS5. NS3 RNA helicase binds RNA and unwinds dsRNA in the 3' to 5' direction. Regulates the ATPase activity of the NS3 helicase activity. NS4A allows NS3 helicase to conserve energy during unwinding. Plays a role in the inhibition of the host innate immune response. Interacts with host MAVS and thereby prevents the interaction between RIGI and MAVS. In turn, IFN-beta production is impaired. Interacts with host AUP1 which mediates induction of lipophagy in host cells and facilitates production of virus progeny particles. In terms of biological role, functions as a signal peptide for NS4B and is required for the interferon antagonism activity of the latter. Functionally, induces the formation of ER-derived membrane vesicles where the viral replication takes place. Inhibits interferon (IFN)-induced host STAT1 phosphorylation and nuclear translocation, thereby preventing the establishment of cellular antiviral state by blocking the IFN-alpha/beta pathway. Its function is as follows. Replicates the viral (+) and (-) RNA genome, and performs the capping of genomes in the cytoplasm. NS5 methylates viral RNA cap at guanine N-7 and ribose 2'-O positions. Besides its role in RNA genome replication, also prevents the establishment of cellular antiviral state by blocking the interferon-alpha/beta (IFN-alpha/beta) signaling pathway. Inhibits host TYK2 and STAT2 phosphorylation, thereby preventing activation of JAK-STAT signaling pathway. The protein is Genome polyprotein (pol) of Dengue virus type 3 (strain Sri Lanka/1266/2000) (DENV-3).